A 75-amino-acid polypeptide reads, in one-letter code: Large ribosomal subunit protein bL31 (75 aa).

It belongs to the bacterial ribosomal protein bL31 family. Type A subfamily. Part of the 50S ribosomal subunit.

In terms of biological role, binds the 23S rRNA. This is Large ribosomal subunit protein bL31 from Chlorobium limicola (strain DSM 245 / NBRC 103803 / 6330).